Consider the following 77-residue polypeptide: NADH-ubiquinone oxidoreductase chain 4L (77 aa).

2 helical membrane-spanning segments follow: residues 15–37 (WQRL…LKFS) and 44–64 (MFFY…VVMV).

Belongs to the complex I subunit 4L family.

Its subcellular location is the mitochondrion membrane. The enzyme catalyses a ubiquinone + NADH + 5 H(+)(in) = a ubiquinol + NAD(+) + 4 H(+)(out). In terms of biological role, core subunit of the mitochondrial membrane respiratory chain NADH dehydrogenase (Complex I) that is believed to belong to the minimal assembly required for catalysis. Complex I functions in the transfer of electrons from NADH to the respiratory chain. The immediate electron acceptor for the enzyme is believed to be ubiquinone. The polypeptide is NADH-ubiquinone oxidoreductase chain 4L (Caenorhabditis elegans).